The following is a 481-amino-acid chain: UDP-N-acetylmuramoyl-L-alanyl-D-glutamate--L-lysine ligase (481 aa).

A UDP-N-acetyl-alpha-D-muramoyl-L-alanyl-D-glutamate-binding site is contributed by serine 42. 118-124 (GTKGKTT) is a binding site for ATP. UDP-N-acetyl-alpha-D-muramoyl-L-alanyl-D-glutamate-binding positions include glutamine 158, 160 to 161 (TT), serine 187, and arginine 195. An N6-carboxylysine modification is found at lysine 229. The short motif at 404 to 407 (DDPN) is the L-lysine recognition motif element.

This sequence belongs to the MurCDEF family. MurE subfamily. Post-translationally, carboxylation is probably crucial for Mg(2+) binding and, consequently, for the gamma-phosphate positioning of ATP.

The protein localises to the cytoplasm. The catalysed reaction is UDP-N-acetyl-alpha-D-muramoyl-L-alanyl-D-glutamate + L-lysine + ATP = UDP-N-acetyl-alpha-D-muramoyl-L-alanyl-gamma-D-glutamyl-L-lysine + ADP + phosphate + H(+). The protein operates within cell wall biogenesis; peptidoglycan biosynthesis. Functionally, catalyzes the addition of L-lysine to the nucleotide precursor UDP-N-acetylmuramoyl-L-alanyl-D-glutamate (UMAG) in the biosynthesis of bacterial cell-wall peptidoglycan. The sequence is that of UDP-N-acetylmuramoyl-L-alanyl-D-glutamate--L-lysine ligase from Streptococcus pyogenes serotype M18 (strain MGAS8232).